The following is a 223-amino-acid chain: MTAATENRTVRRNGPGTKRADWNNWSPLAFEEMDSALNIQQYIQQTIKANPADVATILTPPLDQDEGVWKYEHLRQFCIELNGLALLLQRECIPETCQQMTATEQWIFLCAAHKNPNECPAIDYTRHTLDGAATLLNSNKYFPSRVNIKEISISKLGSVARRVYRIFSHAFFHHRKLFDEFENETHLCKRFTTYVSKYNLMQQEHLIVPILPNQQQQQQTTVQ.

The interval 1 to 23 (MTAATENRTVRRNGPGTKRADWN) is disordered. Residues Cys-92, Cys-97, His-169, and His-174 each contribute to the Zn(2+) site.

It belongs to the MOB1/phocein family.

The protein resides in the cytoplasm. It is found in the perinuclear region. It localises to the membrane. The protein localises to the golgi apparatus. Its subcellular location is the golgi stack membrane. Functionally, may play a role in membrane trafficking, specifically in membrane budding reactions. The sequence is that of MOB-like protein phocein from Caenorhabditis elegans.